The sequence spans 289 residues: Probable signal peptidase I (289 aa).

The Cytoplasmic segment spans residues 1 to 53 (MTETTDSVPEPPSDADQLQPKVSICGLDMPAEVSETAAEAAIGVSEPKKRSAL). Residues 54 to 74 (WEFAILAVIAIGLYYVMLTFV) form a helical membrane-spanning segment. Over 75 to 289 (ARPYLIPSES…VGSVNSQQGQ (215 aa)) the chain is Extracellular. Active-site residues include S84 and K162.

It belongs to the peptidase S26 family.

Its subcellular location is the cell membrane. It carries out the reaction Cleavage of hydrophobic, N-terminal signal or leader sequences from secreted and periplasmic proteins.. This is Probable signal peptidase I (lepB) from Mycobacterium leprae (strain TN).